The following is a 157-amino-acid chain: 2-C-methyl-D-erythritol 2,4-cyclodiphosphate synthase (157 aa).

Residues Asp8 and His10 each coordinate a divalent metal cation. 4-CDP-2-C-methyl-D-erythritol 2-phosphate contacts are provided by residues 8–10 and 34–35; these read DVH and HS. His42 provides a ligand contact to a divalent metal cation. 4-CDP-2-C-methyl-D-erythritol 2-phosphate contacts are provided by residues 56 to 58, 132 to 135, and Arg142; these read DIG and TTNE.

The protein belongs to the IspF family. In terms of assembly, homotrimer. Requires a divalent metal cation as cofactor.

The enzyme catalyses 4-CDP-2-C-methyl-D-erythritol 2-phosphate = 2-C-methyl-D-erythritol 2,4-cyclic diphosphate + CMP. The protein operates within isoprenoid biosynthesis; isopentenyl diphosphate biosynthesis via DXP pathway; isopentenyl diphosphate from 1-deoxy-D-xylulose 5-phosphate: step 4/6. Functionally, involved in the biosynthesis of isopentenyl diphosphate (IPP) and dimethylallyl diphosphate (DMAPP), two major building blocks of isoprenoid compounds. Catalyzes the conversion of 4-diphosphocytidyl-2-C-methyl-D-erythritol 2-phosphate (CDP-ME2P) to 2-C-methyl-D-erythritol 2,4-cyclodiphosphate (ME-CPP) with a corresponding release of cytidine 5-monophosphate (CMP). This Chlorobaculum tepidum (strain ATCC 49652 / DSM 12025 / NBRC 103806 / TLS) (Chlorobium tepidum) protein is 2-C-methyl-D-erythritol 2,4-cyclodiphosphate synthase.